A 331-amino-acid polypeptide reads, in one-letter code: Tetraacyldisaccharide 4'-kinase (331 aa).

Residue 58 to 65 (TVGGSGKT) participates in ATP binding.

It belongs to the LpxK family.

It carries out the reaction a lipid A disaccharide + ATP = a lipid IVA + ADP + H(+). The protein operates within glycolipid biosynthesis; lipid IV(A) biosynthesis; lipid IV(A) from (3R)-3-hydroxytetradecanoyl-[acyl-carrier-protein] and UDP-N-acetyl-alpha-D-glucosamine: step 6/6. Transfers the gamma-phosphate of ATP to the 4'-position of a tetraacyldisaccharide 1-phosphate intermediate (termed DS-1-P) to form tetraacyldisaccharide 1,4'-bis-phosphate (lipid IVA). In Shewanella denitrificans (strain OS217 / ATCC BAA-1090 / DSM 15013), this protein is Tetraacyldisaccharide 4'-kinase.